The following is a 164-amino-acid chain: Ubiquitin-fold modifier-conjugating enzyme 1 (164 aa).

The active-site Glycyl thioester intermediate is Cys116.

The protein belongs to the ubiquitin-conjugating enzyme family. UFC1 subfamily.

Its function is as follows. E2-like enzyme which forms an intermediate with UFM1 via a thioester linkage. The protein is Ubiquitin-fold modifier-conjugating enzyme 1 of Drosophila willistoni (Fruit fly).